Reading from the N-terminus, the 360-residue chain is Dual-specificity RNA methyltransferase RlmN (360 aa).

Catalysis depends on Glu91, which acts as the Proton acceptor. The 234-residue stretch at Arg110 to Asp343 folds into the Radical SAM core domain. Cys117 and Cys348 form a disulfide bridge. [4Fe-4S] cluster is bound by residues Cys124, Cys128, and Cys131. Residues Gly174–Glu175, Ser206, Ser229–His231, and Asn305 contribute to the S-adenosyl-L-methionine site. The active-site S-methylcysteine intermediate is Cys348.

This sequence belongs to the radical SAM superfamily. RlmN family. [4Fe-4S] cluster serves as cofactor.

The protein localises to the cytoplasm. It catalyses the reaction adenosine(2503) in 23S rRNA + 2 reduced [2Fe-2S]-[ferredoxin] + 2 S-adenosyl-L-methionine = 2-methyladenosine(2503) in 23S rRNA + 5'-deoxyadenosine + L-methionine + 2 oxidized [2Fe-2S]-[ferredoxin] + S-adenosyl-L-homocysteine. The enzyme catalyses adenosine(37) in tRNA + 2 reduced [2Fe-2S]-[ferredoxin] + 2 S-adenosyl-L-methionine = 2-methyladenosine(37) in tRNA + 5'-deoxyadenosine + L-methionine + 2 oxidized [2Fe-2S]-[ferredoxin] + S-adenosyl-L-homocysteine. Functionally, specifically methylates position 2 of adenine 2503 in 23S rRNA and position 2 of adenine 37 in tRNAs. m2A2503 modification seems to play a crucial role in the proofreading step occurring at the peptidyl transferase center and thus would serve to optimize ribosomal fidelity. The protein is Dual-specificity RNA methyltransferase RlmN of Aliarcobacter butzleri (strain RM4018) (Arcobacter butzleri).